Here is a 240-residue protein sequence, read N- to C-terminus: 2-C-methyl-D-erythritol 2,4-cyclodiphosphate synthase, apicoplast (240 aa).

Residues Asp-71 and His-73 each coordinate a divalent metal cation. 4-CDP-2-C-methyl-D-erythritol 2-phosphate-binding positions include Asp-71–His-73 and His-115–Ser-116. His-123 contacts a divalent metal cation. Residues Asp-137–Gly-139, Phe-142–Asp-146, Ala-181–Ser-187, and Gly-212–Thr-214 contribute to the 4-CDP-2-C-methyl-D-erythritol 2-phosphate site.

It belongs to the IspF family. As to quaternary structure, homotrimer. Requires a divalent metal cation as cofactor.

It is found in the plastid. It localises to the apicoplast. The catalysed reaction is 4-CDP-2-C-methyl-D-erythritol 2-phosphate = 2-C-methyl-D-erythritol 2,4-cyclic diphosphate + CMP. The protein operates within isoprenoid biosynthesis; isopentenyl diphosphate biosynthesis via DXP pathway; isopentenyl diphosphate from 1-deoxy-D-xylulose 5-phosphate: step 4/6. In terms of biological role, in the mevalonate-independent isoprenoid biosynthetic pathway, converts 4-diphosphocytidyl-2C-methyl-D-erythritol 2-phosphate into 2C-methyl-D-erythritol 2,4-cyclodiphosphate and CMP. The protein is 2-C-methyl-D-erythritol 2,4-cyclodiphosphate synthase, apicoplast of Plasmodium falciparum (isolate 3D7).